Consider the following 201-residue polypeptide: Inosine triphosphate pyrophosphatase (201 aa).

16–21 lines the ITP pocket; the sequence is TGNAKK. Glu44 is a binding site for Mg(2+). ITP-binding positions include Lys56, 72–73, Lys89, 148–151, Lys171, and 176–177; these read DT, FGWD, and HR.

This sequence belongs to the HAM1 NTPase family. As to quaternary structure, homodimer. Requires Mg(2+) as cofactor. It depends on Mn(2+) as a cofactor.

The protein resides in the cytoplasm. It carries out the reaction ITP + H2O = IMP + diphosphate + H(+). The enzyme catalyses dITP + H2O = dIMP + diphosphate + H(+). It catalyses the reaction XTP + H2O = XMP + diphosphate + H(+). In terms of biological role, pyrophosphatase that hydrolyzes non-canonical purine nucleotides such as inosine triphosphate (ITP), deoxyinosine triphosphate (dITP) or xanthosine 5'-triphosphate (XTP) to their respective monophosphate derivatives. The enzyme does not distinguish between the deoxy- and ribose forms. Probably excludes non-canonical purines from RNA and DNA precursor pools, thus preventing their incorporation into RNA and DNA and avoiding chromosomal lesions. In Zea mays (Maize), this protein is Inosine triphosphate pyrophosphatase.